The sequence spans 87 residues: Diazepam-binding inhibitor-like 5 (87 aa).

In terms of domain architecture, ACB spans 2–87; it reads SQVEFEMACA…VEELKKKEPC (86 aa). An acyl-CoA-binding positions include 29-33, Lys-55, and Tyr-74; that span reads YSFYK.

The protein belongs to the ACBP family. Exclusively expressed in late spermatids and spermatozoa. Not found in epididymis, spleen, bone marrow, skin, liver, brain, heart, kidney, muscle.

The protein resides in the cytoplasm. Its function is as follows. May be involved in the energy metabolism of the mature sperm. The chain is Diazepam-binding inhibitor-like 5 (Dbil5) from Mus musculus (Mouse).